The sequence spans 125 residues: MKEPLIEVKREYNLIKTLTGKKFVVSTSIVVVLLIINMIFYGIRIHELAVIRRNSETHISSFNYKGQAQAQNKRVKNTRLFEKCKSKFNNFCIYGECMNIINLDKKFCICNKGYTGNRCDIVSIR.

The first 48 residues, 1–48, serve as a signal peptide directing secretion; sequence MKEPLIEVKREYNLIKTLTGKKFVVSTSIVVVLLIINMIFYGIRIHEL. Residues 80 to 120 enclose the EGF-like domain; sequence LFEKCKSKFNNFCIYGECMNIINLDKKFCICNKGYTGNRCD. Disulfide bonds link C84/C97, C92/C108, and C110/C119.

The protein localises to the secreted. This chain is Probable growth factor FPV211, found in Vertebrata (FPV).